The following is a 254-amino-acid chain: 3-dehydroquinate dehydratase (254 aa).

Residues 47–49 (EFR) and arginine 83 each bind 3-dehydroquinate. Catalysis depends on histidine 144, which acts as the Proton donor/acceptor. Residue lysine 171 is the Schiff-base intermediate with substrate of the active site. Residues arginine 213, serine 232, and glutamine 236 each contribute to the 3-dehydroquinate site.

This sequence belongs to the type-I 3-dehydroquinase family. In terms of assembly, homodimer.

It carries out the reaction 3-dehydroquinate = 3-dehydroshikimate + H2O. The protein operates within metabolic intermediate biosynthesis; chorismate biosynthesis; chorismate from D-erythrose 4-phosphate and phosphoenolpyruvate: step 3/7. Its function is as follows. Involved in the third step of the chorismate pathway, which leads to the biosynthesis of aromatic amino acids. Catalyzes the cis-dehydration of 3-dehydroquinate (DHQ) and introduces the first double bond of the aromatic ring to yield 3-dehydroshikimate. The chain is 3-dehydroquinate dehydratase from Neisseria meningitidis serogroup C / serotype 2a (strain ATCC 700532 / DSM 15464 / FAM18).